The chain runs to 501 residues: Aspartyl/glutamyl-tRNA(Asn/Gln) amidotransferase subunit B (501 aa).

This sequence belongs to the GatB/GatE family. GatB subfamily. Heterotrimer of A, B and C subunits.

The enzyme catalyses L-glutamyl-tRNA(Gln) + L-glutamine + ATP + H2O = L-glutaminyl-tRNA(Gln) + L-glutamate + ADP + phosphate + H(+). It carries out the reaction L-aspartyl-tRNA(Asn) + L-glutamine + ATP + H2O = L-asparaginyl-tRNA(Asn) + L-glutamate + ADP + phosphate + 2 H(+). Functionally, allows the formation of correctly charged Asn-tRNA(Asn) or Gln-tRNA(Gln) through the transamidation of misacylated Asp-tRNA(Asn) or Glu-tRNA(Gln) in organisms which lack either or both of asparaginyl-tRNA or glutaminyl-tRNA synthetases. The reaction takes place in the presence of glutamine and ATP through an activated phospho-Asp-tRNA(Asn) or phospho-Glu-tRNA(Gln). The polypeptide is Aspartyl/glutamyl-tRNA(Asn/Gln) amidotransferase subunit B (Agrobacterium fabrum (strain C58 / ATCC 33970) (Agrobacterium tumefaciens (strain C58))).